Reading from the N-terminus, the 899-residue chain is Lipoxygenase 2, chloroplastic (899 aa).

A chloroplast-targeting transit peptide spans 1–57 (MLKPQIHKPHLVNKLPLGTPFIPSHASIASFSTTSLRTLSVQKCYRRYIRYTSSNIK). The PLAT domain maps to 83–203 (ALTAVTVGLL…DNPDKRIFFL (121 aa)). In terms of domain architecture, Lipoxygenase spans 206–899 (SYLPSETPEG…GKGVPYSISI (694 aa)). Residues 252-286 (DPDTDSDMARPVLGGNEHPFPRRCRTGRKMTSTEP) are disordered. Positions 557, 562, 749, 753, and 899 each coordinate Fe cation.

It belongs to the lipoxygenase family. It depends on Fe cation as a cofactor. In terms of tissue distribution, confined to glandular trichomes in flowers.

Its subcellular location is the plastid. The protein resides in the chloroplast. Its pathway is lipid metabolism; oxylipin biosynthesis. In terms of biological role, plant lipoxygenases may be involved in a number of diverse aspects of plant physiology including growth and development, pest resistance, and senescence or responses to wounding. Catalyzes the hydroperoxidation of lipids containing a cis,cis-1,4-pentadiene structure. The sequence is that of Lipoxygenase 2, chloroplastic from Tanacetum cinerariifolium (Dalmatian daisy).